A 601-amino-acid polypeptide reads, in one-letter code: CDPK-related kinase 5 (601 aa).

Polar residues predominate over residues 1–19 (MGLCTSKPNSSNSDQTPAR). Disordered regions lie at residues 1-55 (MGLC…KSPF) and 70-98 (KKTPARSPATNSTNSTPKRFFKRPFPPPS). Gly-2 carries the N-myristoyl glycine lipid modification. Low complexity predominate over residues 26–35 (SESVKPSSSS). Positions 36-48 (VNGEDQCVTTTNN) are enriched in polar residues. A Protein kinase domain is found at 148 to 410 (YELGDEVGRG…AAQALSHPWI (263 aa)). ATP contacts are provided by residues 154–162 (VGRGHFGYT) and Lys-180. Asp-276 (proton acceptor) is an active-site residue. The residue at position 316 (Ser-316) is a Phosphoserine. The tract at residues 415 to 445 (DAKVPMDILVFKLMRAYLRSSSLRKAALRAL) is autoinhibitory domain. The tract at residues 434 to 454 (SSSLRKAALRALSKTLTVDEL) is calmodulin binding (CaMBD). 4 EF-hand domains span residues 452–488 (DELFYLREQFALLEPSKNGTISLENIKSALMKMATDA), 489–524 (MKDSRIPEFLGQLSALQYRRMDFEEFCAAALSVHQL), 525–564 (EALDRWEQHARCAYELFEKEGNRPIMIDELASELGLGPSV), and 567–596 (HAVLHDWLRHTDGKLSFLGFVKLLHGVSSR). Positions 467, 469, 471, 476, 508, 513, 546, 553, 578, and 580 each coordinate Ca(2+). Phosphoserine is present on Ser-582.

Belongs to the protein kinase superfamily. Ser/Thr protein kinase family. CDPK subfamily. As to quaternary structure, binds calmodulin (CaM) in a calcium-dependent manner.

It localises to the membrane. It catalyses the reaction L-seryl-[protein] + ATP = O-phospho-L-seryl-[protein] + ADP + H(+). It carries out the reaction L-threonyl-[protein] + ATP = O-phospho-L-threonyl-[protein] + ADP + H(+). With respect to regulation, activated by calcium and calmodulin. Autophosphorylation may play an important role in the regulation of the kinase activity. Its function is as follows. May play a role in signal transduction pathways that involve calcium as a second messenger. This is CDPK-related kinase 5 (CRK5) from Arabidopsis thaliana (Mouse-ear cress).